The chain runs to 334 residues: MSDQANQGDLEIRPSPLLKVINDLHSKYKSLKEGIVANYIPELAKVNPDLFSISIVTVDGQVYQVGDYQQLFTIQSISKVFAYGLALEDHGRDYVLTRVGVEPTGEAFNAIILDEQSKRPYNPMVNAGAIATTSLIKGAGATERLNRVLEMFRRYIGHDVFVDISVFTSERSTGHRNRAMAHLMLNFGMIDRNIEEALDLYFQQCAVMVNCHDLAVMAATLANRGVNPITGEQAVNSRYIKDILSVMYTCGMYNFAGEWAYKVGIPAKSGVCGGIMAVVPNLMGIAVFSPPLDIRGNSVRGVKVCEELSQQLGLHLFECMKVGNGEWGVGNCEC.

7 residues coordinate substrate: S76, N126, E170, N177, Y201, Y253, and V271.

Belongs to the glutaminase family. In terms of assembly, homotetramer.

The catalysed reaction is L-glutamine + H2O = L-glutamate + NH4(+). This chain is Glutaminase, found in Nostoc sp. (strain PCC 7120 / SAG 25.82 / UTEX 2576).